The primary structure comprises 397 residues: Carbamoyl phosphate synthase small chain (397 aa).

Residues 1 to 204 (MSPLLPSFPF…PAYRTLDTSK (204 aa)) form a CPSase region. Residues serine 53, glycine 256, and glycine 258 each contribute to the L-glutamine site. The Glutamine amidotransferase type-1 domain maps to 208-395 (KVVAYDFGVK…MELMNAAKKE (188 aa)). Cysteine 284 functions as the Nucleophile in the catalytic mechanism. L-glutamine-binding residues include leucine 285, glutamine 288, asparagine 326, glycine 328, and phenylalanine 329. Active-site residues include histidine 368 and glutamate 370.

This sequence belongs to the CarA family. As to quaternary structure, composed of two chains; the small (or glutamine) chain promotes the hydrolysis of glutamine to ammonia, which is used by the large (or ammonia) chain to synthesize carbamoyl phosphate. Tetramer of heterodimers (alpha,beta)4.

The enzyme catalyses hydrogencarbonate + L-glutamine + 2 ATP + H2O = carbamoyl phosphate + L-glutamate + 2 ADP + phosphate + 2 H(+). It carries out the reaction L-glutamine + H2O = L-glutamate + NH4(+). Its pathway is amino-acid biosynthesis; L-arginine biosynthesis; carbamoyl phosphate from bicarbonate: step 1/1. The protein operates within pyrimidine metabolism; UMP biosynthesis via de novo pathway; (S)-dihydroorotate from bicarbonate: step 1/3. Its function is as follows. Small subunit of the glutamine-dependent carbamoyl phosphate synthetase (CPSase). CPSase catalyzes the formation of carbamoyl phosphate from the ammonia moiety of glutamine, carbonate, and phosphate donated by ATP, constituting the first step of 2 biosynthetic pathways, one leading to arginine and/or urea and the other to pyrimidine nucleotides. The small subunit (glutamine amidotransferase) binds and cleaves glutamine to supply the large subunit with the substrate ammonia. The polypeptide is Carbamoyl phosphate synthase small chain (Polynucleobacter asymbioticus (strain DSM 18221 / CIP 109841 / QLW-P1DMWA-1) (Polynucleobacter necessarius subsp. asymbioticus)).